A 110-amino-acid chain; its full sequence is V-type proton ATPase subunit F (110 aa).

It belongs to the V-ATPase F subunit family. In terms of assembly, V-ATPase is a heteromultimeric enzyme made up of two complexes: the ATP-hydrolytic V1 complex and the proton translocation V0 complex. The V1 complex consists of three catalytic AB heterodimers that form a heterohexamer, three peripheral stalks each consisting of EG heterodimers, one central rotor including subunits D and F, and the regulatory subunits C and H. The proton translocation complex V0 consists of the proton transport subunit a, a ring of proteolipid subunits c9c'', rotary subunit d, subunits e and f, and two accessory subunits.

Functionally, subunit of the V1 complex of vacuolar(H+)-ATPase (V-ATPase), a multisubunit enzyme composed of a peripheral complex (V1) that hydrolyzes ATP and a membrane integral complex (V0) that translocates protons. V-ATPase is responsible for acidifying and maintaining the pH of intracellular compartments and in some cell types, is targeted to the plasma membrane, where it is responsible for acidifying the extracellular environment. In Xenopus laevis (African clawed frog), this protein is V-type proton ATPase subunit F (atp6s14).